The sequence spans 257 residues: Type III pantothenate kinase (257 aa).

6–13 (DVGNTNTV) serves as a coordination point for ATP. Residues Tyr100 and 107–110 (GADR) contribute to the substrate site. The active-site Proton acceptor is the Asp109. Asp129 is a K(+) binding site. Thr132 provides a ligand contact to ATP. Substrate is bound at residue Thr185.

Belongs to the type III pantothenate kinase family. Homodimer. NH4(+) is required as a cofactor. The cofactor is K(+).

It is found in the cytoplasm. The catalysed reaction is (R)-pantothenate + ATP = (R)-4'-phosphopantothenate + ADP + H(+). The protein operates within cofactor biosynthesis; coenzyme A biosynthesis; CoA from (R)-pantothenate: step 1/5. Functionally, catalyzes the phosphorylation of pantothenate (Pan), the first step in CoA biosynthesis. The protein is Type III pantothenate kinase of Desulfatibacillum aliphaticivorans.